The following is a 993-amino-acid chain: MPFISSAELSSRATPPDLQKRKYGEQSQPSEPKRQKIMGGFLDDDDDDDHDGLEAFNEAQYQSEFEIQEQRVDLPQISQSGSRAEPKRPKIMGGFLDNDDDDDDGLEAFNDAHLESQIDTQEQPVKLTEVSRSQSTLESVVINSVTERSTIVPAYAPPNISPTSVKIKTCNGKALNVPLKKPSARVSYERLIASRSTTAPGRAQKSYYGIDIHSLLNESAKEVKAAEAPKPAPVADVRPSIEAPIGDKRSKKLSTAMWTEKYRARKYTELIGDERTNRSILRWLRGWDPIVYPSLARAKQNKKYNNDEEERPHRKVLLLCGPPGLGKTTLAHVCARQAGYEVLEINASDERSRDVVKGRIRDALGTENVKGMNVELGEQKVRKVGRPVCVVVDEVDGVVSGSGGSGEGGFMKALTDLVLLDQRNSARTSERASDGRKRKGDNFRFLRPLILVCNDVYHASLRPLRQSSVAEIIHVRQAPLENVVSRMKSIFTLEGIPSDSDGVRRLCEASWGLAKRKQRGVRSTGAAEGDIRSVLVAAEWVAHKLRNESSAPLRLTRNWLEQRVLADAGGGSFFKGMNRGGVRDIVDRVFTEGAGFPDVPLGDESLQDPYDRSEAVSVDVANIKKRHAIRRLCEMVDASGDHDRCTSECFSSYPLQPYQDDTFLTKPNAAYDWLHFHDTISSRIYSAHDWELGAYLSQATSAFHLLFATAQGKAQQQYREIDEEEEEAHPFSGPRADYAAFEATKQNQAILSTFQSSFSAPLLRLFRSSNNVATELIPNVIRMLSPDIKPVVVRGSEQKSVASVRKESERALVQSAVRVMTGLGVTFEKVRIENEGGGHGGWAYRMEPPLDALVSFSKVPGFSSATNPVRYAVRQVLDQEYRKESIRKNSENLSSTGSKKSTTKSDDIETPANPAEAAKLKYGTAVKRDFFGRIIQDRVPSPQEDMEQALSRKAKSAQQELSSAGRKVWVTYHDGFSNAVRKPISMAELLSGL.

Disordered regions lie at residues 1 to 52 (MPFI…DHDG) and 65 to 107 (FEIQ…DGLE). Composition is skewed to acidic residues over residues 42-51 (LDDDDDDDHD) and 97-106 (DNDDDDDDGL). Position 321-328 (321-328 (GPPGLGKT)) interacts with ATP. A disordered region spans residues 887 to 915 (RKNSENLSSTGSKKSTTKSDDIETPANPA).

Belongs to the activator 1 small subunits family. CTF18 subfamily.

It localises to the nucleus. In terms of biological role, essential for the fidelity of chromosome transmission. Required for the DNA replication block checkpoint. Replication factor C (RFC) complex has an essential but redundant activity in sister chromatid cohesion establishment. This Emericella nidulans (strain FGSC A4 / ATCC 38163 / CBS 112.46 / NRRL 194 / M139) (Aspergillus nidulans) protein is Chromosome transmission fidelity protein 18 (ctf18).